Consider the following 184-residue polypeptide: Autophagy-related protein 101 (184 aa).

It belongs to the ATG101 family. Component of the atg1 kinase complex composed of at least atg1, atg13, atg17 and atg101. Interacts directly with atg13.

The protein resides in the cytoplasm. The protein localises to the nucleus. It is found in the preautophagosomal structure membrane. Functionally, autophagy factor required for autophagosome formation. Component of the atg1 kinase complex in which it stabilizes atg13. Is also responsible for recruiting downstream factors to the autophagosome-formation site. Has a role in meiosis and sporulation. The chain is Autophagy-related protein 101 from Schizosaccharomyces pombe (strain 972 / ATCC 24843) (Fission yeast).